A 246-amino-acid chain; its full sequence is Ribosomal RNA large subunit methyltransferase E (246 aa).

S-adenosyl-L-methionine contacts are provided by glycine 81, tryptophan 83, aspartate 104, aspartate 120, and aspartate 144. Lysine 184 serves as the catalytic Proton acceptor.

The protein belongs to the class I-like SAM-binding methyltransferase superfamily. RNA methyltransferase RlmE family.

It is found in the cytoplasm. It catalyses the reaction uridine(2552) in 23S rRNA + S-adenosyl-L-methionine = 2'-O-methyluridine(2552) in 23S rRNA + S-adenosyl-L-homocysteine + H(+). Specifically methylates the uridine in position 2552 of 23S rRNA at the 2'-O position of the ribose in the fully assembled 50S ribosomal subunit. This is Ribosomal RNA large subunit methyltransferase E from Agrobacterium fabrum (strain C58 / ATCC 33970) (Agrobacterium tumefaciens (strain C58)).